The primary structure comprises 251 residues: Tritrans,polycis-undecaprenyl-diphosphate synthase (geranylgeranyl-diphosphate specific) (251 aa).

Asp29 is a catalytic residue. Asp29 contacts Mg(2+). Residues 30 to 33 (GNRR), Phe34, His46, and 74 to 76 (STE) each bind substrate. The Proton acceptor role is filled by Asn77. Substrate contacts are provided by residues Phe78, Arg80, Arg200, and 206-208 (RLS).

The protein belongs to the UPP synthase family. In terms of assembly, homodimer. Mg(2+) is required as a cofactor.

The enzyme catalyses geranylgeranyl diphosphate + 7 isopentenyl diphosphate = tri-trans,hepta-cis-undecaprenyl diphosphate + 7 diphosphate. In terms of biological role, catalyzes the sequential condensation of isopentenyl diphosphate (IPP) with geranylgeranyl diphosphate (GGPP) to yield (2Z,6Z,10Z,14Z,18Z,22Z,26Z,30E,34E,38E)-undecaprenyl diphosphate (tritrans,heptacis-UPP). It is probably the precursor of glycosyl carrier lipids. The protein is Tritrans,polycis-undecaprenyl-diphosphate synthase (geranylgeranyl-diphosphate specific) of Archaeoglobus fulgidus (strain ATCC 49558 / DSM 4304 / JCM 9628 / NBRC 100126 / VC-16).